Reading from the N-terminus, the 309-residue chain is Homoserine kinase (309 aa).

95-105 (PQSRGLGSSAA) contacts ATP.

This sequence belongs to the GHMP kinase family. Homoserine kinase subfamily.

It is found in the cytoplasm. The catalysed reaction is L-homoserine + ATP = O-phospho-L-homoserine + ADP + H(+). It functions in the pathway amino-acid biosynthesis; L-threonine biosynthesis; L-threonine from L-aspartate: step 4/5. Its function is as follows. Catalyzes the ATP-dependent phosphorylation of L-homoserine to L-homoserine phosphate. The polypeptide is Homoserine kinase (Corynebacterium efficiens (strain DSM 44549 / YS-314 / AJ 12310 / JCM 11189 / NBRC 100395)).